The chain runs to 280 residues: 4-diphosphocytidyl-2-C-methyl-D-erythritol kinase (280 aa).

The active site involves Lys8. Residue 91-101 (PVAAGLAGGST) participates in ATP binding. Asp133 is a catalytic residue.

The protein belongs to the GHMP kinase family. IspE subfamily.

The catalysed reaction is 4-CDP-2-C-methyl-D-erythritol + ATP = 4-CDP-2-C-methyl-D-erythritol 2-phosphate + ADP + H(+). It participates in isoprenoid biosynthesis; isopentenyl diphosphate biosynthesis via DXP pathway; isopentenyl diphosphate from 1-deoxy-D-xylulose 5-phosphate: step 3/6. Functionally, catalyzes the phosphorylation of the position 2 hydroxy group of 4-diphosphocytidyl-2C-methyl-D-erythritol. This Clostridium botulinum (strain ATCC 19397 / Type A) protein is 4-diphosphocytidyl-2-C-methyl-D-erythritol kinase.